Here is a 429-residue protein sequence, read N- to C-terminus: MANVVVVGSQWGDEGKGKIVDWLSERADVIVRYQGGHNAGHTLVIDGVSYKLSLLPSGLVRGKLSVIGNGVVVDPHHFVAEVEKLRGQGIDVTPDVLRVAENAPLILSIHRELDAMREGSNSGLKIGTTKRGIGPAYEDKVGRRAIRVIDLTEPETLRPKVERLLAHHNSLRRGMGLEEIAVETILTELTSVADQILPYIDQVWRVLDERRKAGARILFEGAQGALLDNDHGTYPFVTSSNTVAGQAAAGSGLGPTAIGYVLGITKAYTTRVGEGPFPTELNDEIGEFLGTKGHEFGVVTGRKRRCGWFDAVIVRQTVRTSGINGIALTKLDVLDGLEEIKICVAYELDGKRIDYLPSSMGAQARVKPIYETLPGWSETTAGARSWNDLPAQAVKYVRHIEELIGAPVAMLSTSPEREDTILVTDPFHD.

GTP-binding positions include 12–18 and 40–42; these read GDEGKGK and GHT. Asp13 functions as the Proton acceptor in the catalytic mechanism. Asp13 and Gly40 together coordinate Mg(2+). Residues 13-16, 38-41, Thr129, Arg143, Gln223, Thr238, and Arg302 each bind IMP; these read DEGK and NAGH. His41 functions as the Proton donor in the catalytic mechanism. Substrate is bound at residue 298–304; it reads VVTGRKR. GTP is bound by residues Arg304, 330–332, and 412–414; these read KLD and STS.

Belongs to the adenylosuccinate synthetase family. Homodimer. The cofactor is Mg(2+).

The protein localises to the cytoplasm. The catalysed reaction is IMP + L-aspartate + GTP = N(6)-(1,2-dicarboxyethyl)-AMP + GDP + phosphate + 2 H(+). It functions in the pathway purine metabolism; AMP biosynthesis via de novo pathway; AMP from IMP: step 1/2. Functionally, plays an important role in the de novo pathway of purine nucleotide biosynthesis. Catalyzes the first committed step in the biosynthesis of AMP from IMP. This Brucella abortus (strain 2308) protein is Adenylosuccinate synthetase.